The following is a 371-amino-acid chain: Protein disulfide isomerase-like 2-2 (371 aa).

The signal sequence occupies residues 1 to 27 (MAIPRISPRKTLPLFAALALALAWAFA). 2 Thioredoxin domains span residues 28 to 143 (APAF…TEGG) and 147 to 262 (KLAT…EKCG). Catalysis depends on nucleophile residues Cys-64, Cys-67, Cys-183, and Cys-186. Disulfide bonds link Cys-64-Cys-67 and Cys-183-Cys-186.

Belongs to the protein disulfide isomerase family.

The protein localises to the secreted. The enzyme catalyses Catalyzes the rearrangement of -S-S- bonds in proteins.. Functionally, acts as a protein-folding catalyst that interacts with nascent polypeptides to catalyze the formation, isomerization, and reduction or oxidation of disulfide bonds. May play a role in storage protein biogenesis. The sequence is that of Protein disulfide isomerase-like 2-2 (PDIL2-2) from Oryza sativa subsp. japonica (Rice).